A 251-amino-acid polypeptide reads, in one-letter code: Imidazole glycerol phosphate synthase subunit HisF (251 aa).

Residues Asp-11 and Asp-130 contribute to the active site.

This sequence belongs to the HisA/HisF family. In terms of assembly, heterodimer of HisH and HisF.

It localises to the cytoplasm. The catalysed reaction is 5-[(5-phospho-1-deoxy-D-ribulos-1-ylimino)methylamino]-1-(5-phospho-beta-D-ribosyl)imidazole-4-carboxamide + L-glutamine = D-erythro-1-(imidazol-4-yl)glycerol 3-phosphate + 5-amino-1-(5-phospho-beta-D-ribosyl)imidazole-4-carboxamide + L-glutamate + H(+). The protein operates within amino-acid biosynthesis; L-histidine biosynthesis; L-histidine from 5-phospho-alpha-D-ribose 1-diphosphate: step 5/9. In terms of biological role, IGPS catalyzes the conversion of PRFAR and glutamine to IGP, AICAR and glutamate. The HisF subunit catalyzes the cyclization activity that produces IGP and AICAR from PRFAR using the ammonia provided by the HisH subunit. In Cytophaga hutchinsonii (strain ATCC 33406 / DSM 1761 / CIP 103989 / NBRC 15051 / NCIMB 9469 / D465), this protein is Imidazole glycerol phosphate synthase subunit HisF.